Consider the following 38-residue polypeptide: MTEPNPNKQEVELNRTSLYWGLLLIFVLAILFSSYIFN.

A helical membrane pass occupies residues 17–37 (SLYWGLLLIFVLAILFSSYIF).

This sequence belongs to the PsbL family. As to quaternary structure, PSII is composed of 1 copy each of membrane proteins PsbA, PsbB, PsbC, PsbD, PsbE, PsbF, PsbH, PsbI, PsbJ, PsbK, PsbL, PsbM, PsbT, PsbX, PsbY, PsbZ, Psb30/Ycf12, at least 3 peripheral proteins of the oxygen-evolving complex and a large number of cofactors. It forms dimeric complexes.

Its subcellular location is the plastid. It is found in the chloroplast thylakoid membrane. Functionally, one of the components of the core complex of photosystem II (PSII). PSII is a light-driven water:plastoquinone oxidoreductase that uses light energy to abstract electrons from H(2)O, generating O(2) and a proton gradient subsequently used for ATP formation. It consists of a core antenna complex that captures photons, and an electron transfer chain that converts photonic excitation into a charge separation. This subunit is found at the monomer-monomer interface and is required for correct PSII assembly and/or dimerization. This Mesostigma viride (Green alga) protein is Photosystem II reaction center protein L.